A 1632-amino-acid polypeptide reads, in one-letter code: Guanine exchange factor for Rac 30 (1632 aa).

A Calponin-homology (CH) domain is found at 16-122 (NIQIDSFTSW…VIFLLIQKIK (107 aa)). Disordered regions lie at residues 134–155 (QGETTGTTTTITSTNTTTTPTK) and 171–285 (FSHI…PTTG). 2 stretches are compositionally biased toward low complexity: residues 137 to 154 (TTGTTTTITSTNTTTTPT) and 180 to 284 (QSSS…SPTT). 2 IQ domains span residues 388–417 (DLKKIIFMQSVIRGYLVRSKWRNVLEKYKQ) and 432–461 (AYRGLIRVQAIVKGKIQRKKLFKMFPLYRR). In terms of domain architecture, DH spans 460 to 638 (RRNEIVKEIL…KDVAEYVNEK (179 aa)). Residues 775–795 (QINNQNNNQNNNQNNNLNNNN) are compositionally biased toward low complexity. Positions 775–798 (QINNQNNNQNNNQNNNLNNNNDDS) are disordered. In terms of domain architecture, PH 1 spans 940-1038 (DSEFSNVLEK…WISLIRLSIK (99 aa)). Low complexity predominate over residues 1138-1156 (STSASQSQSQSPSPSPSHS). The segment at 1138 to 1161 (STSASQSQSQSPSPSPSHSINQKQ) is disordered. The Arf-GAP domain occupies 1271–1389 (NSCGDNINND…NNNNNNSQNG (119 aa)). Residues 1286-1309 (CAECGASDPSWVSINYGVVVCLDC) form a C4-type zinc finger. Low complexity-rich tracts occupy residues 1380–1402 (NNNNNNSQNGDSTTPTPTPTSTT), 1409–1431 (STPTSPNLNSQSSPPPTATTTQT), and 1441–1481 (SSPT…TTPT). Residues 1380-1521 (NNNNNNSQNG…SSHAITERKT (142 aa)) are disordered. Polar residues predominate over residues 1500–1515 (DTSNGKGTWSRGSSHA). The region spanning 1532–1631 (KKEHQGYLFK…WLDVLSSHTT (100 aa)) is the PH 2 domain.

It is found in the membrane. The protein resides in the cytoplasmic vesicle. The protein localises to the phagosome membrane. Its function is as follows. GTPase-activating protein for Rac involved in streaming and development. This Dictyostelium discoideum (Social amoeba) protein is Guanine exchange factor for Rac 30 (gxcDD).